A 187-amino-acid polypeptide reads, in one-letter code: Ribonuclease HII (187 aa).

In terms of domain architecture, RNase H type-2 spans 1–187; that stretch reads MIILGIDEAG…YKPVQVLLNE (187 aa). 3 residues coordinate a divalent metal cation: Asp7, Glu8, and Asp99.

It belongs to the RNase HII family. Mn(2+) serves as cofactor. Mg(2+) is required as a cofactor.

Its subcellular location is the cytoplasm. It carries out the reaction Endonucleolytic cleavage to 5'-phosphomonoester.. Functionally, endonuclease that specifically degrades the RNA of RNA-DNA hybrids. The sequence is that of Ribonuclease HII from Francisella tularensis subsp. tularensis (strain FSC 198).